The primary structure comprises 179 residues: Large ribosomal subunit protein uL6 (179 aa).

It belongs to the universal ribosomal protein uL6 family. As to quaternary structure, part of the 50S ribosomal subunit.

Its function is as follows. This protein binds to the 23S rRNA, and is important in its secondary structure. It is located near the subunit interface in the base of the L7/L12 stalk, and near the tRNA binding site of the peptidyltransferase center. In Saccharopolyspora erythraea (strain ATCC 11635 / DSM 40517 / JCM 4748 / NBRC 13426 / NCIMB 8594 / NRRL 2338), this protein is Large ribosomal subunit protein uL6.